A 458-amino-acid polypeptide reads, in one-letter code: UDP-N-acetylglucosamine 1-carboxyvinyltransferase (458 aa).

34–35 (KN) contributes to the phosphoenolpyruvate binding site. Residue R104 participates in UDP-N-acetyl-alpha-D-glucosamine binding. C128 functions as the Proton donor in the catalytic mechanism. At C128 the chain carries 2-(S-cysteinyl)pyruvic acid O-phosphothioketal. Positions 320 and 342 each coordinate UDP-N-acetyl-alpha-D-glucosamine.

The protein belongs to the EPSP synthase family. MurA subfamily.

The protein localises to the cytoplasm. The enzyme catalyses phosphoenolpyruvate + UDP-N-acetyl-alpha-D-glucosamine = UDP-N-acetyl-3-O-(1-carboxyvinyl)-alpha-D-glucosamine + phosphate. It functions in the pathway cell wall biogenesis; peptidoglycan biosynthesis. Cell wall formation. Adds enolpyruvyl to UDP-N-acetylglucosamine. This Prochlorococcus marinus (strain NATL1A) protein is UDP-N-acetylglucosamine 1-carboxyvinyltransferase.